Reading from the N-terminus, the 612-residue chain is Elongation factor 4 (612 aa).

The 183-residue stretch at 11 to 193 (KHIRNFSIIA…KLVTDVPAPT (183 aa)) folds into the tr-type G domain. Residues 23–28 (DHGKST) and 140–143 (NKID) each bind GTP.

It belongs to the TRAFAC class translation factor GTPase superfamily. Classic translation factor GTPase family. LepA subfamily.

Its subcellular location is the cell membrane. It carries out the reaction GTP + H2O = GDP + phosphate + H(+). Its function is as follows. Required for accurate and efficient protein synthesis under certain stress conditions. May act as a fidelity factor of the translation reaction, by catalyzing a one-codon backward translocation of tRNAs on improperly translocated ribosomes. Back-translocation proceeds from a post-translocation (POST) complex to a pre-translocation (PRE) complex, thus giving elongation factor G a second chance to translocate the tRNAs correctly. Binds to ribosomes in a GTP-dependent manner. The chain is Elongation factor 4 from Latilactobacillus sakei subsp. sakei (strain 23K) (Lactobacillus sakei subsp. sakei).